Consider the following 134-residue polypeptide: MKPSERRKARRLAVQAIYSWQLSGNNVADVEHEFLTEQELDGVDVAYFRELFAGAATKTAQLDEKLKPLLDRPLEEVSPVEKAILRLAVYELTFRKDVPYKVVINEAIELAKSFGAEDGHKFVNGILDKLVARN.

This sequence belongs to the NusB family.

In terms of biological role, involved in transcription antitermination. Required for transcription of ribosomal RNA (rRNA) genes. Binds specifically to the boxA antiterminator sequence of the ribosomal RNA (rrn) operons. In Shewanella amazonensis (strain ATCC BAA-1098 / SB2B), this protein is Transcription antitermination protein NusB.